The primary structure comprises 278 residues: NAD-capped RNA hydrolase NudC (278 aa).

A substrate-binding site is contributed by Arg-84. Residues Cys-114 and Cys-117 each coordinate Zn(2+). Glu-127 is a substrate binding site. Residues Cys-132 and Cys-135 each coordinate Zn(2+). Tyr-140 is a substrate binding site. Residues 141–265 enclose the Nudix hydrolase domain; that stretch reads PRLSPSMIVL…IARHLIDLYL (125 aa). A divalent metal cation-binding residues include Ala-174, Glu-190, and Glu-194. A Nudix box motif is present at residues 175–196; the sequence is GFVEAGESVEQCVVREVREEVG. 208–215 is a binding site for substrate; that stretch reads QNWPFPHS. Residue Glu-235 participates in a divalent metal cation binding. Ala-257 is a substrate binding site.

Belongs to the Nudix hydrolase family. NudC subfamily. Homodimer. Mg(2+) is required as a cofactor. Requires Mn(2+) as cofactor. It depends on Zn(2+) as a cofactor.

The enzyme catalyses a 5'-end NAD(+)-phospho-ribonucleoside in mRNA + H2O = a 5'-end phospho-adenosine-phospho-ribonucleoside in mRNA + beta-nicotinamide D-ribonucleotide + 2 H(+). The catalysed reaction is NAD(+) + H2O = beta-nicotinamide D-ribonucleotide + AMP + 2 H(+). It carries out the reaction NADH + H2O = reduced beta-nicotinamide D-ribonucleotide + AMP + 2 H(+). Its function is as follows. mRNA decapping enzyme that specifically removes the nicotinamide adenine dinucleotide (NAD) cap from a subset of mRNAs by hydrolyzing the diphosphate linkage to produce nicotinamide mononucleotide (NMN) and 5' monophosphate mRNA. The NAD-cap is present at the 5'-end of some mRNAs and stabilizes RNA against 5'-processing. Has preference for mRNAs with a 5'-end purine. Catalyzes the hydrolysis of a broad range of dinucleotide pyrophosphates. In Pseudomonas aeruginosa (strain LESB58), this protein is NAD-capped RNA hydrolase NudC.